A 105-amino-acid chain; its full sequence is U2-lycotoxin-Ls1c (105 aa).

Residues 1–17 form the signal peptide; that stretch reads MIKYVLISALLVVAVYS. Positions 18–41 are excised as a propeptide; the sequence is FTIEDSEDALLEEAEDELDTEEER. 4 cysteine pairs are disulfide-bonded: C51-C67, C58-C97, C60-C83, and C69-C81.

This sequence belongs to the neurotoxin 04 (omega-agtx) family. 01 (type I omega-agtx) subfamily. Expressed by the venom gland.

It localises to the secreted. In terms of biological role, insecticidal to house crickets. It induces an excitatory slow-onset impact that leads to irreversible spastic paralysis. It also modifies human voltage-gated potassium channel Kv1.5/KCNA5. Most likely, it binds to the voltage-sensing domain of the channel, suggesting it does not block the pore but prevents its opening at physiological membrane potentials. The recombinant peptide binds to the channel in an irreversible manner and slows down the hKv1.5 current activation kinetics. It is not toxic to mice, when intracranially injected (at 0.5 ug/g mouse). This is U2-lycotoxin-Ls1c from Lycosa singoriensis (Wolf spider).